The chain runs to 519 residues: MATTSTTGSTLLQPLSNAVQLPIDQVNFVVCQLFALLAAVWFRTYLHSSKTSSFIRHVVATLLGLYLAFFCFGWYALHFLVQSGISYCIMIIAGVESMHQCCFVFALGYLSVCQITRVYIFDYGQYSADFSGPMMIITQKITSLAYEIHDGMFRKDEELTPSQRGLAVRRMPSLLEYVSYTCNFMGILAGPLCSYKDYIAFIEGRASHMAQSGENGKEEQHGKAEPSPNAAVTEKLLVCGLSLLFHLTISSMLPVEYNIDEHFQATASWPTKATYLYVSLLAARPKYYFAWTLADAINNAAGFGFRGYDKNGVARWDLISNLRIQQIEMSTSFKMFLDNWNIQTALWLKRVCYERATFSPTVQTFFLSAIWHGVYPGYYLTFLTGVLMTLAARAVRNNFRHYFVEPPQLKLFYDIITWAATQITISYTVVPFVLLSINPSFTFYRSWYYCLHICSILVLLLLPVKKSPRKKNTEENAQPSWAKKFDERENSLGQNSFSMMNNVCNQNQDTGSRHSALTQ.

Helical transmembrane passes span 22–42 (PIDQ…AVWF), 61–81 (TLLG…HFLV), 88–108 (CIMI…FALG), 184–204 (FMGI…FIEG), 236–256 (LLVC…LPVE), and 288–305 (YFAW…GFGF). Catalysis depends on residues Asn341 and His372. 3 helical membrane passes run 365–385 (FFLS…FLTG), 415–435 (IITW…FVLL), and 443–463 (FYRS…LLLP).

The protein belongs to the membrane-bound acyltransferase family.

The protein localises to the endoplasmic reticulum membrane. The enzyme catalyses a 1-acyl-sn-glycero-3-phosphocholine + an acyl-CoA = a 1,2-diacyl-sn-glycero-3-phosphocholine + CoA. The catalysed reaction is a 1-acyl-sn-glycero-3-phosphoethanolamine + an acyl-CoA = a 1,2-diacyl-sn-glycero-3-phosphoethanolamine + CoA. It carries out the reaction a 1-acyl-sn-glycero-3-phosphate + an acyl-CoA = a 1,2-diacyl-sn-glycero-3-phosphate + CoA. It catalyses the reaction (9Z)-hexadecenoyl-CoA + 1-hexadecanoyl-sn-glycero-3-phosphocholine = 1-hexadecanoyl-2-(9Z-hexadecenoyl)-sn-glycero-3-phosphocholine + CoA. The enzyme catalyses 1-hexadecanoyl-sn-glycero-3-phosphoethanolamine + (9Z)-octadecenoyl-CoA = 1-hexadecanoyl-2-(9Z-octadecenoyl)-sn-glycero-3-phosphoethanolamine + CoA. The catalysed reaction is 1-hexadecanoyl-sn-glycero-3-phosphoethanolamine + (9Z)-hexadecenoyl-CoA = 1-hexadecanoyl-2-(9Z)-hexadecenoyl-sn-glycero-3-phosphoethanolamine + CoA. It carries out the reaction 1-(9Z-octadecenoyl)-sn-glycero-3-phospho-L-serine + hexadecanoyl-CoA = 1-(9Z)-octadecenoyl-2-hexadecanoyl-sn-glycero-3-phosphoserine + CoA. It catalyses the reaction (9Z,12Z)-octadecadienoyl-CoA + 1-hexadecanoyl-sn-glycero-3-phosphocholine = 1-hexadecanoyl-2-(9Z,12Z-octadecadienoyl)-sn-glycero-3-phosphocholine + CoA. The enzyme catalyses 1-hexadecanoyl-sn-glycero-3-phosphocholine + (9Z)-octadecenoyl-CoA = 1-hexadecanoyl-2-(9Z-octadecenoyl)-sn-glycero-3-phosphocholine + CoA. The catalysed reaction is 1-hexadecanoyl-sn-glycero-3-phosphate + (9Z)-hexadecenoyl-CoA = 1-hexadecanoyl-2-[(9Z)-hexadec-9-enoyl]-sn-glycero-3-phosphate + CoA. It carries out the reaction 1-hexadecanoyl-sn-glycero-3-phosphate + (9Z)-octadecenoyl-CoA = 1-hexadecanoyl-2-(9Z-octadecenoyl)-sn-glycero-3-phosphate + CoA. It catalyses the reaction a 1-O-(1Z-alkenyl)-sn-glycero-3-phosphocholine + (9Z)-octadecenoyl-CoA = 1-O-(1Z)-alkenyl-2-(9Z)-octadecenoyl-sn-glycero-3-phosphocholine + CoA. The enzyme catalyses a 1-O-(1Z-alkenyl)-sn-glycero-3-phosphoethanolamine + (9Z)-octadecenoyl-CoA = 1-O-(1Z)-alkenyl-2-(9Z)-octadecenoyl-sn-glycero-3-phosphoethanolamine + CoA. The catalysed reaction is 1-octadecanoyl-sn-glycero-3-phosphoethanolamine + (9Z)-octadecenoyl-CoA = 1-octadecanoyl-2-(9Z-octadecenoyl)-sn-glycero-3-phosphoethanolamine + CoA. It carries out the reaction 1-octadecanoyl-sn-glycero-3-phosphocholine + (9Z)-octadecenoyl-CoA = 1-octadecanoyl-2-(9Z-octadecenoyl)-sn-glycero-3-phosphocholine + CoA. It catalyses the reaction 1-(9Z-octadecenoyl)-sn-glycero-3-phosphoethanolamine + (9Z)-octadecenoyl-CoA = 1,2-di-(9Z-octadecenoyl)-sn-glycero-3-phosphoethanolamine + CoA. The protein operates within lipid metabolism; phospholipid metabolism. Its activity is regulated as follows. Partially inhibited by thimerosal. In terms of biological role, acyltransferase which catalyzes the transfer of an acyl group from an acyl-CoA to a lysophospholipid leading to the production of a phospholipid and participates in the reacylation step of the phospholipid remodeling pathway also known as the Lands cycle. May catalyze preferentially the acylation of lysophosphatidylethanolamine (1-acyl-sn-glycero-3-phosphoethanolamine or LPE) and lysophosphatidic acid (LPA) and to a lesser extend lysophosphatidylcholine (LPC) and lysophosphatidylserine (LPS). Prefers oleoyl-CoA as the acyl donor. May be involved in chondrocyte differentiation. This is Membrane-bound glycerophospholipid O-acyltransferase 2 from Rattus norvegicus (Rat).